We begin with the raw amino-acid sequence, 276 residues long: Syntaxin-12 (276 aa).

Ser-2 carries the post-translational modification N-acetylserine. Topologically, residues Ser-2–Arg-248 are cytoplasmic. A coiled-coil region spans residues Ile-33–Ser-131. Phosphoserine occurs at positions 139, 142, 218, and 225. Residues Leu-178 to Ala-240 form the t-SNARE coiled-coil homology domain. Residues Lys-249–Ile-269 traverse the membrane as a helical; Anchor for type IV membrane protein segment. Topologically, residues Trp-270 to Lys-276 are vesicular.

This sequence belongs to the syntaxin family. Interacts with NAPA and SNAP23. Identified in a complex containing STX6, STX12, VAMP4 and VTI1A. Associates with the BLOC-1 complex. Interacts with BLOC1S6. Interacts with GRIPAP1. Forms a complex with GRIP1, GRIA2 and NSG1; controls the intracellular fate of AMPAR and the endosomal sorting of the GRIA2 subunit toward recycling and membrane targeting. Interacts with NSG1. Interacts with TPC1. Interacts (via N-terminus) with VPS13B.

It is found in the endosome membrane. The protein localises to the golgi apparatus membrane. The protein resides in the endomembrane system. Its subcellular location is the early endosome membrane. It localises to the recycling endosome membrane. Its function is as follows. SNARE promoting fusion of transport vesicles with target membranes. Together with SNARE STX6, promotes movement of vesicles from endosomes to the cell membrane, and may therefore function in the endocytic recycling pathway. Through complex formation with GRIP1, GRIA2 and NSG1 controls the intracellular fate of AMPAR and the endosomal sorting of the GRIA2 subunit toward recycling and membrane targeting. The sequence is that of Syntaxin-12 (STX12) from Homo sapiens (Human).